Reading from the N-terminus, the 223-residue chain is MKRN2 opposite strand protein (223 aa).

This Homo sapiens (Human) protein is MKRN2 opposite strand protein (MKRN2OS).